The primary structure comprises 507 residues: Maturase K (507 aa).

This sequence belongs to the intron maturase 2 family. MatK subfamily.

The protein localises to the plastid. It localises to the chloroplast. Its function is as follows. Usually encoded in the trnK tRNA gene intron. Probably assists in splicing its own and other chloroplast group II introns. This is Maturase K from Kalmia buxifolia (Sand myrtle).